A 475-amino-acid polypeptide reads, in one-letter code: Ankyrin repeat, SAM and basic leucine zipper domain-containing protein 1 (475 aa).

A disordered region spans residues Met-1–Trp-24. Phosphoserine occurs at positions 16, 17, and 19. ANK repeat units lie at residues Glu-44–Ser-73, Phe-77–Phe-106, Asp-109–Arg-146, Lys-147–Ala-176, Asn-180–Ile-209, and Asp-213–Gly-242. Positions Thr-273–Glu-336 constitute an SAM domain.

Interacts with DDX4, PIWIL1, RANBP9 and TDRD1.

The protein resides in the cytoplasm. Its function is as follows. Plays a central role during spermatogenesis by repressing transposable elements and preventing their mobilization, which is essential for the germline integrity. Acts via the piRNA metabolic process, which mediates the repression of transposable elements during meiosis by forming complexes composed of piRNAs and Piwi proteins and governs the methylation and subsequent repression of transposons. Its association with pi-bodies suggests a participation in the primary piRNAs metabolic process. Required prior to the pachytene stage to facilitate the production of multiple types of piRNAs, including those associated with repeats involved in the regulation of retrotransposons. May act by mediating protein-protein interactions during germ cell maturation. In Notamacropus eugenii (Tammar wallaby), this protein is Ankyrin repeat, SAM and basic leucine zipper domain-containing protein 1 (ASZ1).